A 271-amino-acid chain; its full sequence is GPN-loop GTPase 3 (271 aa).

13–18 (GAGKST) provides a ligand contact to GTP. The Gly-Pro-Asn (GPN)-loop; involved in dimer interface motif lies at 70 to 72 (GPN). 173-176 (SKVD) contacts GTP.

It belongs to the GPN-loop GTPase family. As to quaternary structure, heterodimers with GPN1 or GPN2. Binds to RNA polymerase II (RNAPII).

Its function is as follows. Small GTPase required for proper nuclear import of RNA polymerase II and III (RNAPII and RNAPIII). May act at an RNAP assembly step prior to nuclear import. The chain is GPN-loop GTPase 3 from Eremothecium gossypii (strain ATCC 10895 / CBS 109.51 / FGSC 9923 / NRRL Y-1056) (Yeast).